The chain runs to 125 residues: Small ribosomal subunit protein uS13 (125 aa).

A disordered region spans residues serine 94–lysine 125. Positions arginine 107 to lysine 125 are enriched in basic residues.

Belongs to the universal ribosomal protein uS13 family. In terms of assembly, part of the 30S ribosomal subunit. Forms a loose heterodimer with protein S19. Forms two bridges to the 50S subunit in the 70S ribosome.

In terms of biological role, located at the top of the head of the 30S subunit, it contacts several helices of the 16S rRNA. In the 70S ribosome it contacts the 23S rRNA (bridge B1a) and protein L5 of the 50S subunit (bridge B1b), connecting the 2 subunits; these bridges are implicated in subunit movement. Contacts the tRNAs in the A and P-sites. In Prosthecochloris aestuarii (strain DSM 271 / SK 413), this protein is Small ribosomal subunit protein uS13.